The following is a 169-amino-acid chain: TNTPEQDRYLQVKKYLEYVVVDNNMYRNYGNAGPCVMSAEISFEPLQEFSSCDIQEPLSQDIVQPAVCGNYYVEVGGECDCGSPKPCRSACCNAATCKLQREHQCDSGECCEKKDDCDLPEICTGRSAKCSCVISQGDLGYGMVEPGTKCTDGMVCSNEQCVDVQTAAK.

In terms of domain architecture, Peptidase M12B spans 14-57; sequence KYLEYVVVDNNMYRNYGNAGPCVMSAEISFEPLQEFSSCDIQEP. A Disintegrin domain is found at 65–129; the sequence is PAVCGNYYVE…PEICTGRSAK (65 aa). Disulfide bonds link C68-C97, C79-C92, C81-C87, C105-C111, C110-C123, and C150-C161. The short motif at 116–118 is the D/ECD-tripeptide element; it reads DCD.

The protein belongs to the venom metalloproteinase (M12B) family. P-III subfamily. P-IIIa sub-subfamily. In terms of assembly, monomer. Requires Zn(2+) as cofactor. In terms of tissue distribution, expressed by the venom gland.

It is found in the secreted. With respect to regulation, inhibited by EDTA, but not by PMSF. Functionally, snake venom zinc metalloproteinase that calcium-independently catalyzes the conversion of prothrombin (F2) to alpha-thrombin through the formation of a thrombin intermediate. This is Zinc metalloproteinase-disintegrin-like mikarin from Micropechis ikaheca (New Guinean small-eyed snake).